The primary structure comprises 796 residues: Protein translocase subunit SecA 2 (796 aa).

Residues Gln-84, 102–106, and Asp-496 each bind ATP; that span reads GEGKT.

Belongs to the SecA family. In terms of assembly, monomer and homodimer (Potential). Part of the accessory SecA2/SecY2 protein translocation apparatus required to export cell wall protein SraP.

It is found in the cell membrane. Its subcellular location is the cytoplasm. The catalysed reaction is ATP + H2O + cellular proteinSide 1 = ADP + phosphate + cellular proteinSide 2.. In terms of biological role, part of the accessory SecA2/SecY2 system specifically required to export SraP, a serine-rich repeat cell wall protein encoded upstream in the same operon. The protein is Protein translocase subunit SecA 2 of Staphylococcus aureus (strain NCTC 8325 / PS 47).